The following is a 312-amino-acid chain: DNA-directed RNA polymerase subunit alpha (312 aa).

The alpha N-terminal domain (alpha-NTD) stretch occupies residues 1–226 (MIEFEKPNIT…EHLNLFTNLT (226 aa)). The segment at 243–312 (DDRILERTIE…DLGLGLKNDK (70 aa)) is alpha C-terminal domain (alpha-CTD).

It belongs to the RNA polymerase alpha chain family. Homodimer. The RNAP catalytic core consists of 2 alpha, 1 beta, 1 beta' and 1 omega subunit. When a sigma factor is associated with the core the holoenzyme is formed, which can initiate transcription.

It catalyses the reaction RNA(n) + a ribonucleoside 5'-triphosphate = RNA(n+1) + diphosphate. In terms of biological role, DNA-dependent RNA polymerase catalyzes the transcription of DNA into RNA using the four ribonucleoside triphosphates as substrates. The polypeptide is DNA-directed RNA polymerase subunit alpha (Streptococcus sanguinis (strain SK36)).